A 163-amino-acid chain; its full sequence is Sperm acrosome membrane-associated protein 3 (163 aa).

The first 35 residues, M1–A35, serve as a signal peptide directing secretion. In terms of domain architecture, C-type lysozyme spans R36 to L163. 4 cysteine pairs are disulfide-bonded: C41-C161, C65-C149, C99-C114, and C110-C128.

It belongs to the glycosyl hydrolase 22 family. In terms of assembly, interacts with ASTL.

Its subcellular location is the secreted. In terms of biological role, sperm surface membrane protein that may be involved in sperm-egg plasma membrane adhesion and fusion during fertilization. It could be a potential receptor for the egg oligosaccharide residue N-acetylglucosamine, which is present in the extracellular matrix over the egg plasma membrane. The processed form has no detectable bacteriolytic activity in vitro. This Bos taurus (Bovine) protein is Sperm acrosome membrane-associated protein 3 (SPACA3).